The following is a 721-amino-acid chain: Kinesin-like protein KIF2C (721 aa).

The tract at residues 1–250 is globular; it reads MESLHARLFP…CSPLTVTDPI (250 aa). Phosphoserine occurs at positions 3 and 19. Serine 92 bears the Phosphoserine; by AURKB mark. A Microtubule tip localization signal motif is present at residues 95-98; it reads SKIP. 7 positions are modified to phosphoserine: serine 106, serine 108, serine 112, serine 162, serine 171, serine 183, and serine 188. The segment at 164-188 is disordered; sequence EAEEQAHSTRSTSSANPGNSVRRKS. Residues 171–182 show a composition bias toward polar residues; sequence STRSTSSANPGN. Residues 203–234 form a negative regulator of microtubule-binding region; it reads EKRAQNSELRIKRAQEYDSSFPNWEFARMIKE. In terms of domain architecture, Kinesin motor spans 254 to 584; the sequence is RICVCVRKRP…LRYADRVKEL (331 aa). ATP is bound by residues arginine 260 and 344 to 351; that span reads GQTGSGKT. Phosphoserine occurs at positions 515 and 626. The stretch at 614–652 forms a coiled coil; that stretch reads GNEEEELSSQMSSFNEAMTQIRELEERALEELREIIQQG.

This sequence belongs to the TRAFAC class myosin-kinesin ATPase superfamily. Kinesin family. MCAK/KIF2 subfamily. Interacts with CENPH. Interacts with MTUS2/TIP150; the interaction is direct. Interacts with MAPRE1; the interaction is direct, regulated by phosphorylation and is probably required for targeting to growing microtubule plus ends. Interacts with KIF18B at microtubule tips; this interaction increases the affinity of both partners for microtubule plus ends and is required for robust microtubule depolymerization. Phosphorylation by AURKA or AURKB strongly reduces KIF18B-binding. Phosphorylation by AURKB, regulates association with centromeres and kinetochores and the microtubule depolymerization activity. In terms of processing, ubiquitinated.

The protein localises to the cytoplasm. It localises to the cytoskeleton. Its subcellular location is the nucleus. The protein resides in the chromosome. It is found in the centromere. The protein localises to the kinetochore. In terms of biological role, in complex with KIF18B, constitutes the major microtubule plus-end depolymerizing activity in mitotic cells. Regulates the turnover of microtubules at the kinetochore and functions in chromosome segregation during mitosis. Plays a role in chromosome congression and is required for the lateral to end-on conversion of the chromosome-microtubule attachment. This is Kinesin-like protein KIF2C (Kif2c) from Mus musculus (Mouse).